The following is a 311-amino-acid chain: Methionyl-tRNA formyltransferase (311 aa).

110 to 113 serves as a coordination point for (6S)-5,6,7,8-tetrahydrofolate; the sequence is SLLP.

The protein belongs to the Fmt family.

It carries out the reaction L-methionyl-tRNA(fMet) + (6R)-10-formyltetrahydrofolate = N-formyl-L-methionyl-tRNA(fMet) + (6S)-5,6,7,8-tetrahydrofolate + H(+). Its function is as follows. Attaches a formyl group to the free amino group of methionyl-tRNA(fMet). The formyl group appears to play a dual role in the initiator identity of N-formylmethionyl-tRNA by promoting its recognition by IF2 and preventing the misappropriation of this tRNA by the elongation apparatus. The chain is Methionyl-tRNA formyltransferase from Streptococcus pyogenes serotype M3 (strain ATCC BAA-595 / MGAS315).